Consider the following 391-residue polypeptide: Phosphoglycerate kinase (391 aa).

Substrate contacts are provided by residues 21-23 (DLN), Arg-36, 59-62 (HLGR), Arg-113, and Arg-146. ATP-binding positions include Lys-197, Glu-319, and 345 to 348 (GGDT).

The protein belongs to the phosphoglycerate kinase family. Monomer.

The protein resides in the cytoplasm. It carries out the reaction (2R)-3-phosphoglycerate + ATP = (2R)-3-phospho-glyceroyl phosphate + ADP. The protein operates within carbohydrate degradation; glycolysis; pyruvate from D-glyceraldehyde 3-phosphate: step 2/5. The polypeptide is Phosphoglycerate kinase (Shewanella frigidimarina (strain NCIMB 400)).